Here is a 368-residue protein sequence, read N- to C-terminus: D-alanine--D-alanine ligase (368 aa).

The ATP-grasp domain occupies 151 to 358 (KKLLAAEGLP…YGTLVSTLVD (208 aa)). 179–234 (KSRLHLPVFVKPARGGSSIGITRVAEWAALDDAIAHARLHDPKVIVESGIIGREVE) lines the ATP pocket. Mg(2+) contacts are provided by D313, E325, and N327.

Belongs to the D-alanine--D-alanine ligase family. The cofactor is Mg(2+). Requires Mn(2+) as cofactor.

It localises to the cytoplasm. It catalyses the reaction 2 D-alanine + ATP = D-alanyl-D-alanine + ADP + phosphate + H(+). It functions in the pathway cell wall biogenesis; peptidoglycan biosynthesis. Its function is as follows. Cell wall formation. The sequence is that of D-alanine--D-alanine ligase from Rhodococcus jostii (strain RHA1).